Reading from the N-terminus, the 343-residue chain is Heat-inducible transcription repressor HrcA (343 aa).

This sequence belongs to the HrcA family.

Functionally, negative regulator of class I heat shock genes (grpE-dnaK-dnaJ and groELS operons). Prevents heat-shock induction of these operons. In Bacillus velezensis (strain DSM 23117 / BGSC 10A6 / LMG 26770 / FZB42) (Bacillus amyloliquefaciens subsp. plantarum), this protein is Heat-inducible transcription repressor HrcA.